The following is a 351-amino-acid chain: Photosystem II D2 protein (351 aa).

A helical membrane pass occupies residues 39–59 (CAYLALGGWLTGTTFVTSWYT). Residue His-116 participates in chlorophyll a binding. A helical transmembrane segment spans residues 123 to 139 (GFMLRQFEIARLVGIRP). The pheophytin a site is built by Gln-128 and Asn-141. Residues 151–164 (VFVSVFLMYPLGQS) traverse the membrane as a helical segment. A chlorophyll a-binding site is contributed by His-196. A helical membrane pass occupies residues 206 to 226 (GALLCAIHGATVENTLFEDGE). Residues His-213 and Phe-260 each coordinate a plastoquinone. Residue His-213 coordinates Fe cation. His-267 is a Fe cation binding site. The helical transmembrane segment at 277-293 (GLWMSAIGIVGLALNLR) threads the bilayer.

Belongs to the reaction center PufL/M/PsbA/D family. PSII is composed of 1 copy each of membrane proteins PsbA, PsbB, PsbC, PsbD, PsbE, PsbF, PsbH, PsbI, PsbJ, PsbK, PsbL, PsbM, PsbT, PsbX, PsbY, PsbZ, Psb30/Ycf12, peripheral proteins PsbO, CyanoQ (PsbQ), PsbU, PsbV and a large number of cofactors. It forms dimeric complexes. Requires The D1/D2 heterodimer binds P680, chlorophylls that are the primary electron donor of PSII, and subsequent electron acceptors. It shares a non-heme iron and each subunit binds pheophytin, quinone, additional chlorophylls, carotenoids and lipids. There is also a Cl(-1) ion associated with D1 and D2, which is required for oxygen evolution. The PSII complex binds additional chlorophylls, carotenoids and specific lipids. as cofactor.

The protein localises to the cellular thylakoid membrane. The enzyme catalyses 2 a plastoquinone + 4 hnu + 2 H2O = 2 a plastoquinol + O2. Functionally, photosystem II (PSII) is a light-driven water:plastoquinone oxidoreductase that uses light energy to abstract electrons from H(2)O, generating O(2) and a proton gradient subsequently used for ATP formation. It consists of a core antenna complex that captures photons, and an electron transfer chain that converts photonic excitation into a charge separation. The D1/D2 (PsbA/PsbD) reaction center heterodimer binds P680, the primary electron donor of PSII as well as several subsequent electron acceptors. D2 is needed for assembly of a stable PSII complex. The polypeptide is Photosystem II D2 protein (Crocosphaera subtropica (strain ATCC 51142 / BH68) (Cyanothece sp. (strain ATCC 51142))).